The primary structure comprises 294 residues: Enoyl-CoA hydratase domain-containing protein 3, mitochondrial (294 aa).

The N-terminal 61 residues, 1–61, are a transit peptide targeting the mitochondrion; sequence MSWLRSCGER…IILNNPQQRN (61 aa).

It belongs to the enoyl-CoA hydratase/isomerase family.

It is found in the mitochondrion. May play a role in fatty acid biosynthesis and insulin sensitivity. The chain is Enoyl-CoA hydratase domain-containing protein 3, mitochondrial (echdc3) from Xenopus laevis (African clawed frog).